Reading from the N-terminus, the 285-residue chain is Orotidine 5'-phosphate decarboxylase (285 aa).

Residues aspartate 40, 62 to 64 (KTH), 93 to 102 (DRKFVDIGST), tyrosine 235, and arginine 253 contribute to the substrate site. Lysine 95 functions as the Proton donor in the catalytic mechanism.

It belongs to the OMP decarboxylase family.

The enzyme catalyses orotidine 5'-phosphate + H(+) = UMP + CO2. It functions in the pathway pyrimidine metabolism; UMP biosynthesis via de novo pathway; UMP from orotate: step 2/2. The protein is Orotidine 5'-phosphate decarboxylase (URA3) of Paracoccidioides brasiliensis.